A 140-amino-acid polypeptide reads, in one-letter code: Nucleoside diphosphate kinase (140 aa).

ATP contacts are provided by Lys-9, Phe-57, Arg-85, Thr-91, Arg-102, and Asn-112. The active-site Pros-phosphohistidine intermediate is the His-115.

This sequence belongs to the NDK family. In terms of assembly, homotetramer. The cofactor is Mg(2+).

It is found in the cytoplasm. It catalyses the reaction a 2'-deoxyribonucleoside 5'-diphosphate + ATP = a 2'-deoxyribonucleoside 5'-triphosphate + ADP. The catalysed reaction is a ribonucleoside 5'-diphosphate + ATP = a ribonucleoside 5'-triphosphate + ADP. Functionally, major role in the synthesis of nucleoside triphosphates other than ATP. The ATP gamma phosphate is transferred to the NDP beta phosphate via a ping-pong mechanism, using a phosphorylated active-site intermediate. The polypeptide is Nucleoside diphosphate kinase (Chlorobaculum parvum (strain DSM 263 / NCIMB 8327) (Chlorobium vibrioforme subsp. thiosulfatophilum)).